Here is a 948-residue protein sequence, read N- to C-terminus: ATPase 8, plasma membrane-type (948 aa).

Over 1–64 (MATEFSWDEI…EKSENKFLKF (64 aa)) the chain is Cytoplasmic. The chain crosses the membrane as a helical span at residues 65–84 (LGFMWNPLSWVMESAAIMAI). The Extracellular portion of the chain corresponds to 85-96 (VLANGGGKAPDW). A helical membrane pass occupies residues 97 to 117 (QDFIGIMVLLIINSTISFIEE). The Cytoplasmic portion of the chain corresponds to 118 to 246 (NNAGNAAAAL…GHFQKVLTSI (129 aa)). Residues 247–267 (GNFCICSIGLGMLIEILIMYP) traverse the membrane as a helical segment. The Extracellular portion of the chain corresponds to 268–276 (IQHRTYRDG). A helical membrane pass occupies residues 277 to 294 (IDNLLVLLIGGIPIAMPT). At 295-646 (VLSVTMAIGS…TSRAIFQRMK (352 aa)) the chain is on the cytoplasmic side. Residue Asp-332 is the 4-aspartylphosphate intermediate of the active site. Positions 591 and 595 each coordinate Mg(2+). Residues 647–668 (NYTIYAVSITIRIVLGFMLVAL) form a helical membrane-spanning segment. The Extracellular segment spans residues 669-673 (IWRFD). A helical membrane pass occupies residues 674–696 (FAPFMVLIIAILNDGTIMTISKD). The Cytoplasmic segment spans residues 697–712 (RVKPSPVPDSWKLNEI). A helical transmembrane segment spans residues 713 to 733 (FATGVVLGTYMALTTVLFFWL). At 734-754 (AHDTDFFSKTFGVRSIQGNEE) the chain is on the extracellular side. Residues 755–775 (ELMAALYLQVSIISQALIFVT) form a helical membrane-spanning segment. Residues 776–787 (RSRSWSFVERPG) lie on the Cytoplasmic side of the membrane. A helical transmembrane segment spans residues 788 to 808 (FLLLIAFVIAQLVATLIAVYA). Residues 809–816 (NWGFARIV) lie on the Extracellular side of the membrane. The chain crosses the membrane as a helical span at residues 817–837 (GCGWGWAGGIWVYSIITYIPL). The Cytoplasmic portion of the chain corresponds to 838 to 948 (DILKFIIRYA…IDTIQQHYTV (111 aa)). At Thr-884 the chain carries Phosphothreonine. Residue Ser-930 is modified to Phosphoserine. An interaction with 14-3-3 proteins region spans residues 946 to 948 (YTV). At Thr-947 the chain carries Phosphothreonine.

This sequence belongs to the cation transport ATPase (P-type) (TC 3.A.3) family. Type IIIA subfamily. Binds to 14-3-3 proteins. The binding is induced by phosphorylation of Thr-947. Binding to 14-3-3 proteins activates the H(+)-ATPase. As to expression, expressed in guard cells, roots and leaves, and barely in mesophyll cells.

The protein localises to the membrane. It carries out the reaction ATP + H2O + H(+)(in) = ADP + phosphate + 2 H(+)(out). Functionally, the plasma membrane H(+) ATPase of plants and fungi generates a proton gradient that drives the active transport of nutrients by H(+)-symport. The resulting external acidification and/or internal alkinization may mediate growth responses. The chain is ATPase 8, plasma membrane-type (AHA8) from Arabidopsis thaliana (Mouse-ear cress).